A 124-amino-acid polypeptide reads, in one-letter code: Small ribosomal subunit protein uS12cy (124 aa).

Belongs to the universal ribosomal protein uS12 family. Part of the 30S ribosomal subunit.

Its subcellular location is the plastid. The protein resides in the chloroplast. Functionally, with S4 and S5 plays an important role in translational accuracy. Located at the interface of the 30S and 50S subunits. The protein is Small ribosomal subunit protein uS12cy (rps12-B) of Olimarabidopsis pumila (Dwarf rocket).